We begin with the raw amino-acid sequence, 176 residues long: GTP-dependent dephospho-CoA kinase (176 aa).

Residues Asp-47, Val-48, Asp-66, and Glu-125 each contribute to the GTP site.

This sequence belongs to the GTP-dependent DPCK family.

It catalyses the reaction 3'-dephospho-CoA + GTP = GDP + CoA + H(+). Its pathway is cofactor biosynthesis; coenzyme A biosynthesis. In terms of biological role, catalyzes the GTP-dependent phosphorylation of the 3'-hydroxyl group of dephosphocoenzyme A to form coenzyme A (CoA). The chain is GTP-dependent dephospho-CoA kinase from Methanocella arvoryzae (strain DSM 22066 / NBRC 105507 / MRE50).